The chain runs to 285 residues: LGKEAAVKAIKEWGQPKSKITHLIFCTTSGVDMPGADYQLTKLLGLRPYVKRYMMYQQGCFAGGTVLRLAKDLAENNKGARVLVVCSEVTAVTFRGPSDTHLDSLVGQALFGDGAAALIVGSDPIPEIEKPIFEMVWTAQTIAPDSEGAIDGHLREAGLTFHLLKDVPGIVSKNIDKALVEAFQPLNISDYNSIFWIAHPGGPAILDQVEQKLGLKPEKMKATREVLSEYGNMSSACVLFILDEMRKKSAQQGLKTTGEGLDWGVLFGFGPGLTIETVVLHSVAL.

Residue Cys-60 is part of the active site.

Belongs to the thiolase-like superfamily. Chalcone/stilbene synthases family.

It carries out the reaction (E)-4-coumaroyl-CoA + 3 malonyl-CoA + 3 H(+) = 2',4,4',6'-tetrahydroxychalcone + 3 CO2 + 4 CoA. The protein operates within secondary metabolite biosynthesis; flavonoid biosynthesis. In terms of biological role, the primary product of this enzyme is 4,2',4',6'-tetrahydroxychalcone (also termed naringenin-chalcone or chalcone) which can under specific conditions spontaneously isomerize into naringenin. This Medicago sativa (Alfalfa) protein is Chalcone synthase 6-4 (CHS6-4).